The sequence spans 622 residues: DNA mismatch repair protein MutL (622 aa).

Belongs to the DNA mismatch repair MutL/HexB family.

Its function is as follows. This protein is involved in the repair of mismatches in DNA. It is required for dam-dependent methyl-directed DNA mismatch repair. May act as a 'molecular matchmaker', a protein that promotes the formation of a stable complex between two or more DNA-binding proteins in an ATP-dependent manner without itself being part of a final effector complex. The protein is DNA mismatch repair protein MutL of Prosthecochloris aestuarii (strain DSM 271 / SK 413).